Consider the following 329-residue polypeptide: SLAM family member 5 (329 aa).

The signal sequence occupies residues 1-21; it reads MAQRHLWIWFLCLQTWSEAAG. Residues 22 to 221 lie on the Extracellular side of the membrane; it reads KDADPMVMNG…TPSFHPRHAV (200 aa). The 104-residue stretch at 26–129 folds into the Ig-like V-type domain; the sequence is PMVMNGILGE…IYYLHIYRRL (104 aa). The Ig-like C2-type domain occupies 132-206; the sequence is PKITQSLISS…SNSSDSVTVQ (75 aa). The N-linked (GlcNAc...) asparagine glycan is linked to Asn147. A disulfide bridge connects residues Cys152 and Cys190. A helical transmembrane segment spans residues 222-242; it reads LPGGLAVLFLLILIPMLAFLF. At 243–329 the chain is on the cytoplasmic side; it reads RLYKRRRDRI…PKALGNEIVV (87 aa). The ITSM 1 signature appears at 263–268; it reads TVYAVV. Phosphotyrosine is present on Tyr265. Tyr280 carries the post-translational modification Phosphotyrosine; by LYN. Residues 298 to 303 carry the ITSM 2 motif; that stretch reads TIYSSV. Residue Tyr300 is modified to Phosphotyrosine.

Homodimer; via its extracellular domain. Forms a head to tail dimer with a CD48 molecule from another cell. Interacts with SH2 domain-containing proteins SH2D1A/SAP and SH2D1B/EAT-2. Interacts with tyrosine-protein phosphatases PTPN6/SHP-1 and PTPN11/SHP-2 via its phosphorylated cytoplasmic domain, and this interaction is blocked by SH2D1A. In terms of processing, phosphorylated by tyrosine-protein kinase LCK on tyrosine residues following ligation induced by agonist monoclonal antibody. The association with SH2D1A/SAP is dependent of tyrosine phosphorylation of its cytoplasmic domain. Phosphorylated on Tyr-280 and Tyr-300 following platelet aggregation. Phosphorylated on tyrosine residues upon high affinity immunoglobulin epsilon receptor aggregation in mast cells. Post-translationally, N-glycosylated. In terms of tissue distribution, predominantly expressed in hematopoietic tissues such as lymph node, spleen, thymus, and bone marrow. Detected also in lung.

The protein localises to the cell membrane. Its function is as follows. Self-ligand receptor of the signaling lymphocytic activation molecule (SLAM) family. SLAM receptors triggered by homo- or heterotypic cell-cell interactions are modulating the activation and differentiation of a wide variety of immune cells and thus are involved in the regulation and interconnection of both innate and adaptive immune response. Activities are controlled by presence or absence of small cytoplasmic adapter proteins, SH2D1A/SAP and/or SH2D1B/EAT-2. Can mediate natural killer (NK) cell cytotoxicity dependent on SH2D1A and SH2D1B. Increases proliferative responses of activated T-cells and SH2D1A/SAP does not seen be required for this process. Homophilic interactions enhance interferon gamma/IFNG secretion in lymphocytes and induce platelet stimulation via a SH2D1A/SAP-dependent pathway. May serve as a marker for hematopoietic progenitor cells. Required for a prolonged T-cell:B-cell contact, optimal T follicular helper function, and germinal center formation. In germinal centers involved in maintaining B cell tolerance and in preventing autoimmunity. In mast cells negatively regulates high affinity immunoglobulin epsilon receptor signaling; independent of SH2D1A and SH2D1B but implicating FES and PTPN6/SHP-1. In macrophages enhances LPS-induced MAPK phosphorylation and NF-kappaB activation and modulates LPS-induced cytokine secretion; involving ITSM 2. Positively regulates macroautophagy in primary dendritic cells via stabilization of IRF8; inhibits TRIM21-mediated proteasomal degradation of IRF8. The sequence is that of SLAM family member 5 (Cd84) from Mus musculus (Mouse).